The following is a 353-amino-acid chain: Photosystem II protein D1 (353 aa).

An N-acetylthreonine modification is found at threonine 2. Threonine 2 is subject to Phosphothreonine. The next 3 membrane-spanning stretches (helical) occupy residues 29 to 46, 118 to 133, and 142 to 156; these read YIGWFGVLMIPLLLTATS, HFLLGVACYMGREWEL, and WIAVAYSAPVAAATA. Residue histidine 118 coordinates chlorophyll a. Tyrosine 126 lines the pheophytin a pocket. The [CaMn4O5] cluster site is built by aspartate 170 and glutamate 189. The helical transmembrane segment at 197 to 218 threads the bilayer; that stretch reads FHMLGVAGVFGGSLFSAMHGSL. Position 198 (histidine 198) interacts with chlorophyll a. A quinone contacts are provided by residues histidine 215 and 264–265; that span reads SF. Histidine 215 lines the Fe cation pocket. Histidine 272 serves as a coordination point for Fe cation. Residues 274 to 288 form a helical membrane-spanning segment; that stretch reads FLAAWPVVCIWFTAL. Residues histidine 332, glutamate 333, aspartate 342, and alanine 344 each coordinate [CaMn4O5] cluster. Positions 345-353 are excised as a propeptide; it reads SVDAPAVQG.

This sequence belongs to the reaction center PufL/M/PsbA/D family. PSII is composed of 1 copy each of membrane proteins PsbA, PsbB, PsbC, PsbD, PsbE, PsbF, PsbH, PsbI, PsbJ, PsbK, PsbL, PsbM, PsbT, PsbX, PsbY, PsbZ, Psb30/Ycf12, at least 3 peripheral proteins of the oxygen-evolving complex and a large number of cofactors. It forms dimeric complexes. The D1/D2 heterodimer binds P680, chlorophylls that are the primary electron donor of PSII, and subsequent electron acceptors. It shares a non-heme iron and each subunit binds pheophytin, quinone, additional chlorophylls, carotenoids and lipids. D1 provides most of the ligands for the Mn4-Ca-O5 cluster of the oxygen-evolving complex (OEC). There is also a Cl(-1) ion associated with D1 and D2, which is required for oxygen evolution. The PSII complex binds additional chlorophylls, carotenoids and specific lipids. serves as cofactor. Tyr-161 forms a radical intermediate that is referred to as redox-active TyrZ, YZ or Y-Z. Post-translationally, C-terminally processed by CTPA; processing is essential to allow assembly of the oxygen-evolving complex and thus photosynthetic growth.

The protein localises to the plastid. It localises to the chloroplast thylakoid membrane. The catalysed reaction is 2 a plastoquinone + 4 hnu + 2 H2O = 2 a plastoquinol + O2. In terms of biological role, photosystem II (PSII) is a light-driven water:plastoquinone oxidoreductase that uses light energy to abstract electrons from H(2)O, generating O(2) and a proton gradient subsequently used for ATP formation. It consists of a core antenna complex that captures photons, and an electron transfer chain that converts photonic excitation into a charge separation. The D1/D2 (PsbA/PsbD) reaction center heterodimer binds P680, the primary electron donor of PSII as well as several subsequent electron acceptors. The sequence is that of Photosystem II protein D1 from Nephroselmis olivacea (Green alga).